Consider the following 520-residue polypeptide: Bifunctional purine biosynthesis protein PurH (520 aa).

One can recognise an MGS-like domain in the interval 1-147 (MAKIGRALIS…KNNRDVTVVV (147 aa)).

This sequence belongs to the PurH family.

The catalysed reaction is (6R)-10-formyltetrahydrofolate + 5-amino-1-(5-phospho-beta-D-ribosyl)imidazole-4-carboxamide = 5-formamido-1-(5-phospho-D-ribosyl)imidazole-4-carboxamide + (6S)-5,6,7,8-tetrahydrofolate. The enzyme catalyses IMP + H2O = 5-formamido-1-(5-phospho-D-ribosyl)imidazole-4-carboxamide. It participates in purine metabolism; IMP biosynthesis via de novo pathway; 5-formamido-1-(5-phospho-D-ribosyl)imidazole-4-carboxamide from 5-amino-1-(5-phospho-D-ribosyl)imidazole-4-carboxamide (10-formyl THF route): step 1/1. It functions in the pathway purine metabolism; IMP biosynthesis via de novo pathway; IMP from 5-formamido-1-(5-phospho-D-ribosyl)imidazole-4-carboxamide: step 1/1. In Geobacter sp. (strain M21), this protein is Bifunctional purine biosynthesis protein PurH.